The primary structure comprises 48 residues: Histone H4 (48 aa).

Residues Met-1–Lys-14 are compositionally biased toward gly residues. The segment at Met-1 to Arg-23 is disordered.

Belongs to the histone H4 family. As to quaternary structure, the nucleosome is a histone octamer containing two molecules each of H2A, H2B, H3 and H4 assembled in one H3-H4 heterotetramer and two H2A-H2B heterodimers. The octamer wraps approximately 147 bp of DNA.

It is found in the nucleus. The protein resides in the chromosome. Core component of nucleosome. Nucleosomes wrap and compact DNA into chromatin, limiting DNA accessibility to the cellular machineries which require DNA as a template. Histones thereby play a central role in transcription regulation, DNA repair, DNA replication and chromosomal stability. DNA accessibility is regulated via a complex set of post-translational modifications of histones, also called histone code, and nucleosome remodeling. The protein is Histone H4 of Blepharisma japonicum.